The sequence spans 130 residues: Small ribosomal subunit protein uS9 (130 aa).

The disordered stretch occupies residues 98 to 130 (LKRAGMLTRDPRMKERKKPGLKGARRSPQFSKR). Positions 111–130 (KERKKPGLKGARRSPQFSKR) are enriched in basic residues.

Belongs to the universal ribosomal protein uS9 family.

This chain is Small ribosomal subunit protein uS9, found in Macrococcus caseolyticus (strain JCSC5402) (Macrococcoides caseolyticum).